Consider the following 297-residue polypeptide: ER membrane protein complex subunit 2 (297 aa).

At alanine 2 the chain carries N-acetylalanine. 3 TPR repeats span residues 87 to 120 (HRVK…DPTN), 155 to 188 (QEAW…NPYN), and 192 to 225 (CQQY…NNRN). Lysine 255 carries the N6-acetyllysine modification.

Belongs to the EMC2 family. In terms of assembly, component of the ER membrane protein complex (EMC).

It is found in the endoplasmic reticulum membrane. Part of the endoplasmic reticulum membrane protein complex (EMC) that enables the energy-independent insertion into endoplasmic reticulum membranes of newly synthesized membrane proteins. Preferentially accommodates proteins with transmembrane domains that are weakly hydrophobic or contain destabilizing features such as charged and aromatic residues. Involved in the cotranslational insertion of multi-pass membrane proteins in which stop-transfer membrane-anchor sequences become ER membrane spanning helices. It is also required for the post-translational insertion of tail-anchored/TA proteins in endoplasmic reticulum membranes. By mediating the proper cotranslational insertion of N-terminal transmembrane domains in an N-exo topology, with translocated N-terminus in the lumen of the ER, controls the topology of multi-pass membrane proteins like the G protein-coupled receptors. By regulating the insertion of various proteins in membranes, it is indirectly involved in many cellular processes. The polypeptide is ER membrane protein complex subunit 2 (Bos taurus (Bovine)).